The sequence spans 915 residues: Rab3 GTPase-activating protein catalytic subunit (915 aa).

The protein belongs to the Rab3-GAP catalytic subunit family. The Rab3 GTPase-activating complex is a heterodimer composed of rbg-1 and rbg-2.

Its subcellular location is the cytoplasm. Probable catalytic subunit of a GTPase activating protein that has specificity for Rab3 subfamily. Rab3 proteins are involved in regulated exocytosis of neurotransmitters and hormones. Specifically converts active Rab3-GTP to the inactive form Rab3-GDP. This chain is Rab3 GTPase-activating protein catalytic subunit (rbg-1), found in Caenorhabditis elegans.